The chain runs to 256 residues: Myb family transcription factor MPH1 (256 aa).

Residues 14-74 (RSEVPRMRWT…HLQMYRSGSS (61 aa)) enclose the HTH myb-type domain. The H-T-H motif DNA-binding region spans 45–70 (PKRILQLMGVKGVSISHIKSHLQMYR).

In terms of tissue distribution, highly expressed in the pulvinus and stem nodes. Expressed in the plumule of germinating seeds, coleoptile, leaves, internodes, leave sheaths, spikes and roots.

It is found in the nucleus. Functionally, probable transcription factor involved in the regulation of plant height by elongating internode cell length. Involved in the positive regulation of grain yield. May be involved in the regulation of genes related to cell elongation and cell wall synthesis, which are associated with plant height and yield phenotypes. Plays a role in tolerance to cadmium stress. The polypeptide is Myb family transcription factor MPH1 (Oryza sativa subsp. japonica (Rice)).